The chain runs to 240 residues: Ubiquinone biosynthesis O-methyltransferase (240 aa).

S-adenosyl-L-methionine contacts are provided by Arg44, Gly64, Asp85, and Met129.

This sequence belongs to the methyltransferase superfamily. UbiG/COQ3 family.

It carries out the reaction a 3-demethylubiquinol + S-adenosyl-L-methionine = a ubiquinol + S-adenosyl-L-homocysteine + H(+). The catalysed reaction is a 3-(all-trans-polyprenyl)benzene-1,2-diol + S-adenosyl-L-methionine = a 2-methoxy-6-(all-trans-polyprenyl)phenol + S-adenosyl-L-homocysteine + H(+). It functions in the pathway cofactor biosynthesis; ubiquinone biosynthesis. O-methyltransferase that catalyzes the 2 O-methylation steps in the ubiquinone biosynthetic pathway. This chain is Ubiquinone biosynthesis O-methyltransferase, found in Escherichia coli O157:H7.